Reading from the N-terminus, the 343-residue chain is Anthranilate phosphoribosyltransferase (343 aa).

5-phospho-alpha-D-ribose 1-diphosphate contacts are provided by residues Gly84, 87–88 (GD), Thr92, 94–97 (NIST), 112–120 (KHGNRSASS), and Ser124. Gly84 contacts anthranilate. Ser96 contributes to the Mg(2+) binding site. Residue Asn115 coordinates anthranilate. Arg170 contacts anthranilate. Asp229 and Glu230 together coordinate Mg(2+).

The protein belongs to the anthranilate phosphoribosyltransferase family. Homodimer. Requires Mg(2+) as cofactor.

It catalyses the reaction N-(5-phospho-beta-D-ribosyl)anthranilate + diphosphate = 5-phospho-alpha-D-ribose 1-diphosphate + anthranilate. The protein operates within amino-acid biosynthesis; L-tryptophan biosynthesis; L-tryptophan from chorismate: step 2/5. Catalyzes the transfer of the phosphoribosyl group of 5-phosphorylribose-1-pyrophosphate (PRPP) to anthranilate to yield N-(5'-phosphoribosyl)-anthranilate (PRA). The sequence is that of Anthranilate phosphoribosyltransferase from Bordetella avium (strain 197N).